A 250-amino-acid chain; its full sequence is tRNA (guanine-N(1)-)-methyltransferase (250 aa).

S-adenosyl-L-methionine contacts are provided by residues G116 and 136-141 (IGDYVL).

It belongs to the RNA methyltransferase TrmD family. Homodimer.

It localises to the cytoplasm. The enzyme catalyses guanosine(37) in tRNA + S-adenosyl-L-methionine = N(1)-methylguanosine(37) in tRNA + S-adenosyl-L-homocysteine + H(+). Specifically methylates guanosine-37 in various tRNAs. The chain is tRNA (guanine-N(1)-)-methyltransferase from Stutzerimonas stutzeri (strain A1501) (Pseudomonas stutzeri).